Reading from the N-terminus, the 134-residue chain is Complexin-2 (134 aa).

The segment at 1 to 114 is disordered; the sequence is MDFVMKQALG…CGDEEEEEEE (114 aa). Positions 15–85 are enriched in basic and acidic residues; sequence DMGKMLGGEE…EEKEAEEKAA (71 aa). Residues 28–84 are a coiled coil; the sequence is PDAQKKEEERQEALRQQEEERKAKHARMEAEREKVRQQIRDKYGLKKKEEKEAEEKA. Residues 41–97 are interaction with the SNARE complex; it reads LRQQEEERKAKHARMEAEREKVRQQIRDKYGLKKKEEKEAEEKAALEQPCEGSLTRP. Phosphoserine is present on Ser93.

Belongs to the complexin/synaphin family. Binds to the SNARE core complex containing SNAP25, VAMP2 and STX1A. In terms of tissue distribution, nervous system. Also present in adrenal chromaffin cells (at protein level).

Its subcellular location is the cytoplasm. It localises to the cytosol. It is found in the presynapse. The protein resides in the nucleus. The protein localises to the perikaryon. Negatively regulates the formation of synaptic vesicle clustering at active zone to the presynaptic membrane in postmitotic neurons. Positively regulates a late step in exocytosis of various cytoplasmic vesicles, such as synaptic vesicles and other secretory vesicles. Also involved in mast cell exocytosis. The polypeptide is Complexin-2 (CPLX2) (Bos taurus (Bovine)).